A 178-amino-acid chain; its full sequence is Large ribosomal subunit protein eL20 (178 aa).

It belongs to the eukaryotic ribosomal protein eL20 family.

This Castanea sativa (Sweet chestnut) protein is Large ribosomal subunit protein eL20 (RPL18A).